Consider the following 419-residue polypeptide: 3-isopropylmalate dehydratase large subunit (419 aa).

Residues Cys-301, Cys-361, and Cys-364 each coordinate [4Fe-4S] cluster.

The protein belongs to the aconitase/IPM isomerase family. LeuC type 2 subfamily. In terms of assembly, heterodimer of LeuC and LeuD. [4Fe-4S] cluster is required as a cofactor.

It catalyses the reaction (2R,3S)-3-isopropylmalate = (2S)-2-isopropylmalate. The protein operates within amino-acid biosynthesis; L-leucine biosynthesis; L-leucine from 3-methyl-2-oxobutanoate: step 2/4. In terms of biological role, catalyzes the isomerization between 2-isopropylmalate and 3-isopropylmalate, via the formation of 2-isopropylmaleate. This chain is 3-isopropylmalate dehydratase large subunit, found in Campylobacter hominis (strain ATCC BAA-381 / DSM 21671 / CCUG 45161 / LMG 19568 / NCTC 13146 / CH001A).